The primary structure comprises 371 residues: Diterpene cyclase DtcycA (371 aa).

Mg(2+) contacts are provided by N234, S238, and E242.

This sequence belongs to the terpene synthase family. As to quaternary structure, homodimer. Requires Mg(2+) as cofactor.

The catalysed reaction is (2E,6E,10E)-geranylgeranyl diphosphate = cembrene C + diphosphate. The enzyme catalyses (2E,6E,10E)-geranylgeranyl diphosphate + H2O = (R)-nephthenol + diphosphate. Functionally, diterpene cyclases that can form multiple diterpene products. This chain is Diterpene cyclase DtcycA, found in Streptomyces sp.